A 307-amino-acid polypeptide reads, in one-letter code: N-acetylneuraminate lyase (307 aa).

Thr-51 and Thr-52 together coordinate aceneuramate. The active-site Proton donor is the Tyr-143. Lys-173 serves as the catalytic Schiff-base intermediate with substrate. Aceneuramate is bound by residues Ser-175, Gly-199, Asp-201, Glu-202, and Ser-218.

The protein belongs to the DapA family. NanA subfamily. As to quaternary structure, homotetramer.

The protein resides in the cytoplasm. The catalysed reaction is aceneuramate = aldehydo-N-acetyl-D-mannosamine + pyruvate. It functions in the pathway amino-sugar metabolism; N-acetylneuraminate degradation. Its function is as follows. Catalyzes the cleavage of N-acetylneuraminic acid (sialic acid) to form pyruvate and N-acetylmannosamine via a Schiff base intermediate. It prevents sialic acids from being recycled and returning to the cell surface. Involved in the N-glycolylneuraminic acid (Neu5Gc) degradation pathway. The sequence is that of N-acetylneuraminate lyase from Danio rerio (Zebrafish).